We begin with the raw amino-acid sequence, 633 residues long: Phosphomethylpyrimidine synthase (633 aa).

Substrate-binding positions include asparagine 245, methionine 274, tyrosine 303, histidine 339, 359–361, 400–403, and glutamate 439; these read SRG and DGLR. Residue histidine 443 coordinates Zn(2+). Tyrosine 466 contacts substrate. Histidine 507 serves as a coordination point for Zn(2+). Positions 587, 590, and 595 each coordinate [4Fe-4S] cluster.

It belongs to the ThiC family. In terms of assembly, homodimer. It depends on [4Fe-4S] cluster as a cofactor.

It carries out the reaction 5-amino-1-(5-phospho-beta-D-ribosyl)imidazole + S-adenosyl-L-methionine = 4-amino-2-methyl-5-(phosphooxymethyl)pyrimidine + CO + 5'-deoxyadenosine + formate + L-methionine + 3 H(+). It participates in cofactor biosynthesis; thiamine diphosphate biosynthesis. Its function is as follows. Catalyzes the synthesis of the hydroxymethylpyrimidine phosphate (HMP-P) moiety of thiamine from aminoimidazole ribotide (AIR) in a radical S-adenosyl-L-methionine (SAM)-dependent reaction. The protein is Phosphomethylpyrimidine synthase of Neisseria gonorrhoeae (strain ATCC 700825 / FA 1090).